We begin with the raw amino-acid sequence, 59 residues long: Large ribosomal subunit protein uL30 (59 aa).

It belongs to the universal ribosomal protein uL30 family. As to quaternary structure, part of the 50S ribosomal subunit.

This is Large ribosomal subunit protein uL30 from Bacillus subtilis (strain 168).